Reading from the N-terminus, the 202-residue chain is Heart- and neural crest derivatives-expressed protein 1 (202 aa).

Positions 83–135 (RKGVGGPKKERRRTESINSAFAELRECIPNVPADTKLSKIKTLRLATSYIAYL) constitute a bHLH domain. The segment at 143–187 (SQPGEPEGFKAELKKADGRENKRKRETQPEVYSQPLAHGEKKLKG) is disordered. A compositionally biased stretch (basic and acidic residues) spans 149–162 (EGFKAELKKADGRE).

As to quaternary structure, efficient DNA binding requires dimerization with another bHLH protein.

Its subcellular location is the nucleus. The protein resides in the nucleoplasm. It localises to the nucleolus. In terms of biological role, transcription factor. Plays an essential role in cardiac morphogenesis. The polypeptide is Heart- and neural crest derivatives-expressed protein 1 (HAND1) (Gallus gallus (Chicken)).